The primary structure comprises 412 residues: NF-kappa-B essential modulator (412 aa).

A disordered region spans residues Met1 to Pro48. The segment at Met1–Val197 is required for interaction with and ubiquitination by MARCHF2. Residues Ser31 and Ser43 each carry the phosphoserine; by IKKB modification. The segment at Glu44–Lys111 is interaction with CHUK/IKBKB. A coiled-coil region spans residues Glu49–Arg345. The residue at position 68 (Ser68) is a Phosphoserine. At Ser85 the chain carries Phosphoserine; by ATM. Residues Lys111, Lys139, Lys143, Lys226, and Lys246 each participate in a glycyl lysine isopeptide (Lys-Gly) (interchain with G-Cter in ubiquitin) cross-link. An interaction with TANK region spans residues Leu150–Gly250. Residues Asp242–Ser343 are ubiquitin-binding (UBAN). Residues Lys246–Gln358 form a self-association region. The required for interaction with TNFAIP3 stretch occupies residues Lys249–Glu412. The interval Gly250 to Gly339 is linear polyubiquitin-binding, does not bind to 'Lys-63'-linked polyubiquitin. Lys270 is covalently cross-linked (Glycyl lysine isopeptide (Lys-Gly) (interchain with G-Cter in SUMO); alternate). Lys270 is covalently cross-linked (Glycyl lysine isopeptide (Lys-Gly) (interchain with G-Cter in ubiquitin); alternate). Glycyl lysine isopeptide (Lys-Gly) (interchain with G-Cter in ubiquitin) cross-links involve residues Lys276, Lys278, Lys285, and Lys295. Residue Lys302 forms a Glycyl lysine isopeptide (Lys-Gly) (interchain with G-Cter in SUMO); alternate linkage. A Glycyl lysine isopeptide (Lys-Gly) (interchain with G-Cter in ubiquitin); alternate cross-link involves residue Lys302. Residues Lys314, Lys318, and Lys319 each participate in a glycyl lysine isopeptide (Lys-Gly) (interchain with G-Cter in ubiquitin) cross-link. The interval Leu315–Leu336 is leucine-zipper. Position 369 is a phosphoserine; by IKKB (Ser369). Residues Ser375–Glu412 form an interaction with CYLD region. Phosphoserine is present on Ser380. A CCHC NOA-type zinc finger spans residues Pro382–Glu412. Cys390 serves as a coordination point for Zn(2+). Residue Lys392 forms a Glycyl lysine isopeptide (Lys-Gly) (interchain with G-Cter in ubiquitin) linkage. Residues Cys393, His406, and Cys410 each coordinate Zn(2+).

Homodimer; disulfide-linked. Component of the I-kappa-B-kinase (IKK) core complex consisting of CHUK, IKBKB and IKBKG; probably four alpha/CHUK-beta/IKBKB dimers are associated with four gamma/IKBKG subunits. The IKK core complex seems to associate with regulatory or adapter proteins to form a IKK-signalosome holo-complex. The IKK complex associates with TERF2IP/RAP1, leading to promote IKK-mediated phosphorylation of RELA/p65. Part of a complex composed of NCOA2, NCOA3, CHUK/IKKA, IKBKB, IKBKG and CREBBP. Interacts with COPS3, CYLD, NALP2, TRPC4AP and PIDD1. Interacts with ATM; the complex is exported from the nucleus. Interacts with TRAF6. Interacts with IKBKE. Interacts with TANK; the interaction is enhanced by IKBKE and TBK1. Part of a ternary complex consisting of TANK, IKBKB and IKBKG. Interacts with ZFAND5. Interacts with RIPK2. Interacts with TNIP1 and TNFAIP3; TNIP1 facilitates the TNFAIP3-mediated de-ubiquitination of IKBKG. Interacts with TNFAIP3; the interaction is induced by TNF stimulation and by polyubiquitin. Binds (via UBAN region) polyubiquitin; binds both 'Lys-63'-linked and linear polyubiquitin, with higher affinity for linear ubiquitin. Interacts with NLRP10. Interacts with TANK; this interaction increases in response to DNA damage. Interacts with USP10; this interaction increases in response to DNA damage. Interacts with ZC3H12A; this interaction increases in response to DNA damage. Interacts with IFIT5; the interaction synergizes the recruitment of IKK to MAP3K7 and enhances IKK phosphorylation. Interacts with TRIM29; this interaction induces IKBKG/NEMO ubiquitination and proteolytic degradation. Interacts with TRIM13; this interaction leads to IKBKG/NEMO ubiquitination. Interacts with ARFIP2. Interacts with RIPK1. Interacts with (ubiquitinated) BCL10; interaction with polyubiquitinated BCL10 via both 'Lys-63'-linked and linear ubiquitin is required for TCR-induced NF-kappa-B activation. Interacts with MARCHF2; during the late stages of macrophage viral and bacterial infection; the interaction leads to ubiquitination and degradation of IKBKG/NEMO. Post-translationally, phosphorylation at Ser-68 attenuates aminoterminal homodimerization. Polyubiquitinated on Lys-278 via 'Lys-63'-linked ubiquitin; the ubiquitination is mediated downstream of NOD2 and RIPK2 and probably plays a role in signaling by facilitating interactions with ubiquitin domain-containing proteins and activates the NF-kappa-B pathway. Polyubiquitinated on Lys-278 and Lys-302 through 'Lys-63'-linked ubiquitin; the ubiquitination is mediated by BCL10, MALT1 and TRAF6 and probably plays a role in signaling by facilitating interactions with ubiquitin domain-containing proteins and activates the NF-kappa-B pathway. Monoubiquitinated on Lys-270 and Lys-302; promotes nuclear export. Polyubiquitinated through 'Lys-27' by TRIM23; involved in antiviral innate and inflammatory responses. Linear polyubiquitinated on Lys-111, Lys-143, Lys-226, Lys-246, Lys-270, Lys-278, Lys-285, Lys-295, Lys-302 and Lys-319; the head-to-tail polyubiquitination is mediated by the LUBAC complex and plays a key role in NF-kappa-B activation. Deubiquitinated by USP10 in a TANK-dependent and -independent manner, leading to the negative regulation of NF-kappa-B signaling upon DNA damage. Ubiquitinated at Lys-319 by MARCHF2 following bacterial and viral infection which leads to its degradation. Polyubiquitinated via 'Lys-29'-linked ubiquitin; leading to lysosomal degradation. In terms of processing, sumoylated on Lys-270 and Lys-302 with SUMO1; the modification results in phosphorylation of Ser-85 by ATM leading to a replacement of the sumoylation by mono-ubiquitination on these residues. Post-translationally, neddylated by TRIM40, resulting in stabilization of NFKBIA and down-regulation of NF-kappa-B activity.

The protein localises to the cytoplasm. It is found in the nucleus. In terms of biological role, regulatory subunit of the IKK core complex which phosphorylates inhibitors of NF-kappa-B thus leading to the dissociation of the inhibitor/NF-kappa-B complex and ultimately the degradation of the inhibitor. Its binding to scaffolding polyubiquitin plays a key role in IKK activation by multiple signaling receptor pathways. Can recognize and bind both 'Lys-63'-linked and linear polyubiquitin upon cell stimulation, with a much highr affinity for linear polyubiquitin. Could be implicated in NF-kappa-B-mediated protection from cytokine toxicity. Essential for viral activation of IRF3. Involved in TLR3- and IFIH1-mediated antiviral innate response; this function requires 'Lys-27'-linked polyubiquitination. The protein is NF-kappa-B essential modulator (Ikbkg) of Mus musculus (Mouse).